The following is a 1122-amino-acid chain: Receptor-type guanylate cyclase gcy-5 (1122 aa).

The first 19 residues, 1–19 (MRLLYFSMVLLWVLGASEC), serve as a signal peptide directing secretion. The Extracellular portion of the chain corresponds to 20 to 486 (QVIPSSRRTL…CPVQFWDQYG (467 aa)). Asn252, Asn299, Asn344, Asn350, Asn378, Asn434, and Asn439 each carry an N-linked (GlcNAc...) asparagine glycan. The helical transmembrane segment at 487 to 507 (VLIFVASIVLIFLICIMLMCF) threads the bilayer. The Cytoplasmic segment spans residues 508-1122 (GFMIRGRRAE…KSKMDTLKVV (615 aa)). Residues 536 to 562 (QKEKRKPNSRRSLQSGPSTITGESKMT) form a disordered region. The region spanning 542-830 (PNSRRSLQSG…NTNLMDHVFN (289 aa)) is the Protein kinase domain. A compositionally biased stretch (polar residues) spans 545 to 559 (RRSLQSGPSTITGES). The Guanylate cyclase domain occupies 888–1018 (TVLFSDVVKF…DTVNTASRME (131 aa)). A disordered region spans residues 1071–1122 (SDTKSLSTRTTPPITDENWPPQMKEDLKKRAVTPYPERQRSGKSKMDTLKVV). Over residues 1074–1083 (KSLSTRTTPP) the composition is skewed to polar residues. Residues 1107 to 1122 (ERQRSGKSKMDTLKVV) are compositionally biased toward basic and acidic residues.

Belongs to the adenylyl cyclase class-4/guanylyl cyclase family. As to expression, expressed in both ASEL and ASER neurons during early embryonic stages and becomes specifically expressed in ASER neuron in early larval stage.

It localises to the cell membrane. It carries out the reaction GTP = 3',5'-cyclic GMP + diphosphate. Its function is as follows. Guanylate cyclase involved in the production of the second messenger cGMP. Unlike other guanylate cyclases expressed in ASE neurons, may not play a role in chemotaxis responses to salt ions mediated by ASE sensory neurons. The protein is Receptor-type guanylate cyclase gcy-5 of Caenorhabditis elegans.